A 164-amino-acid chain; its full sequence is uncharacterized protein (164 aa).

This is an uncharacterized protein from Caenorhabditis elegans.